The primary structure comprises 619 residues: MSEILQKITDPKEIKDLDEKELEMLAKELREFLIESVSNTGGHFASNLGVIDLTVALFKNFDFSENRIIWDVGHQSYAYKILTGRKDKFNTLRQYGGLCGFPKRTESEYDFFATGHSSTSLSSAAGMARAQKILGKDNKVIAVIGDGALTGGMALEALNDIGYRKDNLIIILNDNQMSICKNVGGLATYLNKLRMGVGYNKLKSDIGSTLDTTSLGKRVKNSLSKLKDGIKKIVVPSMYFEDIGLKYFGIVDGHNIRELNEVLSIAKSIKGPVIIHTVTKKGKGYELAEKNPNKYHGVSPFDLGEGVISKFANRNYSSTFGEEMIKLAKNDDKVVAITAAMPDGTGLKDFREEFPDRFFDVGIAEQHAVTLAAGMAAEGLKPFFAVYSTFLQRAYDQVLHDVCIQNLPVTLCLDRAGLVGEDGETHQGIFDISFLSPMPNMTIVAPKCIDEMEVILKWASNFNAPLAIRYPRGGDIDVNLKPLSKIEYGKWEKVQEGEKIAIVATGKMVQHAMIAAQKIKEEKNIDILIINATFIKPIDKELLNSLSKDGFKIVTIEDNIKKGGFGEGVLEYLNEIGHEEKIVTLAFNDKFIEHGKPDILYRINGLDAEGIKNTLIELL.

Residues H74 and 115–117 (GHS) contribute to the thiamine diphosphate site. Residue D146 coordinates Mg(2+). Residues 147–148 (GA), N175, Y285, and E365 contribute to the thiamine diphosphate site. N175 lines the Mg(2+) pocket.

This sequence belongs to the transketolase family. DXPS subfamily. Homodimer. Mg(2+) is required as a cofactor. The cofactor is thiamine diphosphate.

The enzyme catalyses D-glyceraldehyde 3-phosphate + pyruvate + H(+) = 1-deoxy-D-xylulose 5-phosphate + CO2. It functions in the pathway metabolic intermediate biosynthesis; 1-deoxy-D-xylulose 5-phosphate biosynthesis; 1-deoxy-D-xylulose 5-phosphate from D-glyceraldehyde 3-phosphate and pyruvate: step 1/1. Catalyzes the acyloin condensation reaction between C atoms 2 and 3 of pyruvate and glyceraldehyde 3-phosphate to yield 1-deoxy-D-xylulose-5-phosphate (DXP). This is 1-deoxy-D-xylulose-5-phosphate synthase from Clostridium perfringens (strain SM101 / Type A).